The following is a 2084-amino-acid chain: MAP kinase-activating death domain protein (2084 aa).

Residues 25–352 enclose the uDENN domain; the sequence is TPPMPKGLQG…VPVPGSTRVE (328 aa). A disordered region spans residues 117–253; it reads PSSAAGSAGA…SPRASRKRTK (137 aa). Positions 118 to 131 are enriched in low complexity; it reads SSAAGSAGAGNDRP. A compositionally biased stretch (gly residues) spans 132-152; that stretch reads GNGGPGGHGGGAGGGAGGGGR. Over residues 160–173 the composition is skewed to basic and acidic residues; it reads FRRESWRKSMERSS. Low complexity predominate over residues 174–183; it reads DSAFSSDYRS. The span at 189-204 shows a compositional bias: basic and acidic residues; it reads DSDRELTSRRDSDQQR. The span at 205-215 shows a compositional bias: basic residues; that stretch reads LHSHHSHHQPH. Residues 234–245 show a composition bias toward polar residues; the sequence is DSESGGSHSPSP. The region spanning 373–514 is the cDENN domain; the sequence is RFSLVDFPLH…EGTILKNHLK (142 aa). A dDENN domain is found at 516–678; sequence ALTSMTATNT…EWSLTPTNVA (163 aa). Disordered stretches follow at residues 557-588, 730-749, 811-863, 891-963, 1058-1092, 1115-1188, and 1305-1382; these read TPPH…NSPA, QPTD…SSSY, VASK…TVGS, QESD…SQSS, HSAG…GNNF, FGKK…AENQ, and SSSL…GQST. A compositionally biased stretch (polar residues) spans 558–588; that stretch reads PPHSAQASQRNSMSAQGTISSRQPSPMNSPA. Residues 824 to 839 are compositionally biased toward low complexity; it reads SPVSSSSSRSDLSSPS. Residues 913 to 925 are compositionally biased toward basic and acidic residues; that stretch reads HPSDSESRPEKKI. The span at 946 to 963 shows a compositional bias: low complexity; sequence GSSGSSSSSPGRQSSQSS. Positions 1121-1131 are enriched in low complexity; sequence QKQVPVQQKQP. Residues 1168–1183 show a composition bias toward basic and acidic residues; that stretch reads TQEELTRQQNQERSHS. Residues 1305–1315 show a composition bias toward low complexity; it reads SSSLLSSHAAS. 2 stretches are compositionally biased toward polar residues: residues 1324-1353 and 1370-1382; these read RSPS…STQL and RLSS…GQST. The Death domain maps to 1490 to 1565; the sequence is GMDQGPIEMM…GLVYSQEVHN (76 aa). The span at 1794 to 1842 shows a compositional bias: low complexity; that stretch reads DIHAQQKQKHQQQQQHQQPQQQQQPHQTTTQQNQPTAVASAVPTTTAPA. Disordered regions lie at residues 1794–1865 and 1896–2084; these read DIHA…RHTV and VPVP…HRKH. Polar residues predominate over residues 1845–1858; that stretch reads VNPNRMTAKSQAGS. Positions 1896–1907 are enriched in pro residues; that stretch reads VPVPPTPAPPTS. Residues 1921 to 1932 show a composition bias toward polar residues; it reads SQPSTESLASIS. Pro residues-rich tracts occupy residues 1933 to 1953 and 1983 to 1993; these read SPPP…PAIP and QYTPQPPPPFV. Composition is skewed to low complexity over residues 2001 to 2029 and 2059 to 2077; these read LARA…HSQS and ISGS…ASAS.

This sequence belongs to the MADD family.

The protein localises to the cell membrane. Its subcellular location is the cytoplasm. Functionally, guanyl-nucleotide exchange factor that regulates small GTPases. Converts GDP-bound inactive form of Rab3 to the GTP-bound active forms. The polypeptide is MAP kinase-activating death domain protein (Drosophila melanogaster (Fruit fly)).